We begin with the raw amino-acid sequence, 229 residues long: Small ribosomal subunit protein uS2c (229 aa).

Belongs to the universal ribosomal protein uS2 family.

The protein localises to the plastid. It localises to the chloroplast. The sequence is that of Small ribosomal subunit protein uS2c (rps2) from Emiliania huxleyi (Coccolithophore).